The sequence spans 141 residues: ATP synthase F(0) complex subunit C3, mitochondrial (141 aa).

Residues 1–66 (MFACAKLART…REFQTSVISR (66 aa)) constitute a mitochondrion transit peptide. Residues 82–102 (VGVAGSGAGIGTVFGSLIIGY) form a helical membrane-spanning segment. Lys109 is subject to N6,N6,N6-trimethyllysine. Residues 117-137 (ILGFALSEAMGLFCLMVAFLI) form a helical membrane-spanning segment.

Belongs to the ATPase C chain family. As to quaternary structure, F-type ATPases have 2 components, CF(1) - the catalytic core - and CF(0) - the membrane proton channel. CF(1) has five subunits: alpha(3), beta(3), gamma(1), delta(1), epsilon(1). CF(0) has three main subunits: a, b and c. Interacts with TMEM70 and TMEM242. Post-translationally, trimethylated by ATPSCKMT at Lys-109. Methylation is required for proper incorporation of the C subunit into the ATP synthase complex and mitochondrial respiration.

The protein localises to the mitochondrion membrane. Mitochondrial membrane ATP synthase (F(1)F(0) ATP synthase or Complex V) produces ATP from ADP in the presence of a proton gradient across the membrane which is generated by electron transport complexes of the respiratory chain. F-type ATPases consist of two structural domains, F(1) - containing the extramembraneous catalytic core and F(0) - containing the membrane proton channel, linked together by a central stalk and a peripheral stalk. During catalysis, ATP synthesis in the catalytic domain of F(1) is coupled via a rotary mechanism of the central stalk subunits to proton translocation. Part of the complex F(0) domain. A homomeric c-ring of probably 10 subunits is part of the complex rotary element. The polypeptide is ATP synthase F(0) complex subunit C3, mitochondrial (Mus musculus (Mouse)).